A 116-amino-acid polypeptide reads, in one-letter code: Large ribosomal subunit protein bL17 (116 aa).

It belongs to the bacterial ribosomal protein bL17 family. As to quaternary structure, part of the 50S ribosomal subunit. Contacts protein L32.

The sequence is that of Large ribosomal subunit protein bL17 from Synechocystis sp. (strain ATCC 27184 / PCC 6803 / Kazusa).